Here is a 312-residue protein sequence, read N- to C-terminus: uncharacterized protein (312 aa).

The segment at 95–119 is disordered; it reads EKRRENPPKLTLPPLPPPAEERKKP.

The protein resides in the plastid. It localises to the chloroplast. This is an uncharacterized protein from Chlamydomonas moewusii (Chlamydomonas eugametos).